The following is a 310-amino-acid chain: Ribosomal RNA large subunit methyltransferase F (310 aa).

It belongs to the methyltransferase superfamily. METTL16/RlmF family.

Its subcellular location is the cytoplasm. It carries out the reaction adenosine(1618) in 23S rRNA + S-adenosyl-L-methionine = N(6)-methyladenosine(1618) in 23S rRNA + S-adenosyl-L-homocysteine + H(+). Specifically methylates the adenine in position 1618 of 23S rRNA. In Pseudoalteromonas translucida (strain TAC 125), this protein is Ribosomal RNA large subunit methyltransferase F.